Here is a 437-residue protein sequence, read N- to C-terminus: Chromosomal replication initiator protein DnaA (437 aa).

The domain I, interacts with DnaA modulators stretch occupies residues 1–72 (MEQFNAFKSL…ESLYEGIKSV (72 aa)). Residues 72–99 (VNFVNEQDFFFNLAKLEENSRDTLYQNS) are domain II. The tract at residues 100-320 (GLSKNYTFQN…GIATKLLFFA (221 aa)) is domain III, AAA+ region. The ATP site is built by glycine 144, glycine 146, lysine 147, and threonine 148. The interval 321-437 (KTSKQNLINT…LRDVITSLVI (117 aa)) is domain IV, binds dsDNA.

The protein belongs to the DnaA family. As to quaternary structure, oligomerizes as a right-handed, spiral filament on DNA at oriC.

The protein resides in the cytoplasm. Plays an essential role in the initiation and regulation of chromosomal replication. ATP-DnaA binds to the origin of replication (oriC) to initiate formation of the DNA replication initiation complex once per cell cycle. Binds the DnaA box (a 9 base pair repeat at the origin) and separates the double-stranded (ds)DNA. Forms a right-handed helical filament on oriC DNA; dsDNA binds to the exterior of the filament while single-stranded (ss)DNA is stabiized in the filament's interior. The ATP-DnaA-oriC complex binds and stabilizes one strand of the AT-rich DNA unwinding element (DUE), permitting loading of DNA polymerase. After initiation quickly degrades to an ADP-DnaA complex that is not apt for DNA replication. Binds acidic phospholipids. The protein is Chromosomal replication initiator protein DnaA of Mycoplasma genitalium (strain ATCC 33530 / DSM 19775 / NCTC 10195 / G37) (Mycoplasmoides genitalium).